A 174-amino-acid chain; its full sequence is uncharacterized protein (174 aa).

Residues 42–174 (SSNKNINLYE…GVKGMFWYPR (133 aa)) enclose the N-acetyltransferase domain.

Belongs to the acetyltransferase family. Ycf52 subfamily.

It is found in the plastid. The protein localises to the chloroplast. This is an uncharacterized protein from Pyropia yezoensis (Susabi-nori).